A 377-amino-acid polypeptide reads, in one-letter code: Queuine tRNA-ribosyltransferase (377 aa).

Residue Asp91 is the Proton acceptor of the active site. Substrate is bound by residues 91 to 95 (DSGGF), Asp145, Gln189, and Gly216. The interval 247–253 (GVGKPED) is RNA binding. Asp266 serves as the catalytic Nucleophile. Residues 271–275 (TRNAR) form an RNA binding; important for wobble base 34 recognition region. Zn(2+)-binding residues include Cys304, Cys306, Cys309, and His335.

Belongs to the queuine tRNA-ribosyltransferase family. Homodimer. Within each dimer, one monomer is responsible for RNA recognition and catalysis, while the other monomer binds to the replacement base PreQ1. It depends on Zn(2+) as a cofactor.

It carries out the reaction 7-aminomethyl-7-carbaguanine + guanosine(34) in tRNA = 7-aminomethyl-7-carbaguanosine(34) in tRNA + guanine. It functions in the pathway tRNA modification; tRNA-queuosine biosynthesis. Its function is as follows. Catalyzes the base-exchange of a guanine (G) residue with the queuine precursor 7-aminomethyl-7-deazaguanine (PreQ1) at position 34 (anticodon wobble position) in tRNAs with GU(N) anticodons (tRNA-Asp, -Asn, -His and -Tyr). Catalysis occurs through a double-displacement mechanism. The nucleophile active site attacks the C1' of nucleotide 34 to detach the guanine base from the RNA, forming a covalent enzyme-RNA intermediate. The proton acceptor active site deprotonates the incoming PreQ1, allowing a nucleophilic attack on the C1' of the ribose to form the product. After dissociation, two additional enzymatic reactions on the tRNA convert PreQ1 to queuine (Q), resulting in the hypermodified nucleoside queuosine (7-(((4,5-cis-dihydroxy-2-cyclopenten-1-yl)amino)methyl)-7-deazaguanosine). This Vibrio parahaemolyticus serotype O3:K6 (strain RIMD 2210633) protein is Queuine tRNA-ribosyltransferase.